The primary structure comprises 518 residues: uncharacterized protein (518 aa).

The protein resides in the virion. This is an uncharacterized protein from Acanthamoeba polyphaga (Amoeba).